A 635-amino-acid chain; its full sequence is Leucine aminopeptidase 2-2 (635 aa).

Residues 141–143 and 265–270 contribute to the substrate site; these read QCQ and PYGGME. His294 provides a ligand contact to Zn(2+). Catalysis depends on Glu295, which acts as the Proton acceptor. Zn(2+)-binding residues include His298 and Glu317. Residue Tyr399 is the Proton donor of the active site.

It belongs to the peptidase M1 family. Requires Zn(2+) as cofactor.

The protein resides in the cytoplasm. It localises to the nucleus. The catalysed reaction is an epoxide + H2O = an ethanediol. Functionally, aminopeptidase that preferentially cleaves di- and tripeptides. Also has low epoxide hydrolase activity (in vitro). Can hydrolyze the epoxide leukotriene LTA(4) but it forms preferentially 5,6-dihydroxy-7,9,11,14-eicosatetraenoic acid rather than the cytokine leukotriene B(4) as the product compared to the homologous mammalian enzyme (in vitro). The sequence is that of Leucine aminopeptidase 2-2 (LTA4) from Scheffersomyces stipitis (strain ATCC 58785 / CBS 6054 / NBRC 10063 / NRRL Y-11545) (Yeast).